Reading from the N-terminus, the 362-residue chain is Chorismate synthase (362 aa).

NADP(+) is bound at residue Arg-47. FMN contacts are provided by residues 124-126, Gly-286, 301-305, and Arg-327; these read RSS and KPTAT.

This sequence belongs to the chorismate synthase family. As to quaternary structure, homotetramer. FMNH2 is required as a cofactor.

The enzyme catalyses 5-O-(1-carboxyvinyl)-3-phosphoshikimate = chorismate + phosphate. It functions in the pathway metabolic intermediate biosynthesis; chorismate biosynthesis; chorismate from D-erythrose 4-phosphate and phosphoenolpyruvate: step 7/7. In terms of biological role, catalyzes the anti-1,4-elimination of the C-3 phosphate and the C-6 proR hydrogen from 5-enolpyruvylshikimate-3-phosphate (EPSP) to yield chorismate, which is the branch point compound that serves as the starting substrate for the three terminal pathways of aromatic amino acid biosynthesis. This reaction introduces a second double bond into the aromatic ring system. The chain is Chorismate synthase from Synechococcus sp. (strain ATCC 27144 / PCC 6301 / SAUG 1402/1) (Anacystis nidulans).